We begin with the raw amino-acid sequence, 367 residues long: Glutamate 5-kinase (367 aa).

ATP is bound at residue lysine 10. 3 residues coordinate substrate: serine 50, aspartate 137, and asparagine 149. 169-170 (TD) serves as a coordination point for ATP. The region spanning 275-353 (AGEITVDEGA…QQIDAILGYE (79 aa)) is the PUA domain.

It belongs to the glutamate 5-kinase family.

Its subcellular location is the cytoplasm. The catalysed reaction is L-glutamate + ATP = L-glutamyl 5-phosphate + ADP. It functions in the pathway amino-acid biosynthesis; L-proline biosynthesis; L-glutamate 5-semialdehyde from L-glutamate: step 1/2. Its function is as follows. Catalyzes the transfer of a phosphate group to glutamate to form L-glutamate 5-phosphate. In Salmonella paratyphi B (strain ATCC BAA-1250 / SPB7), this protein is Glutamate 5-kinase.